A 500-amino-acid polypeptide reads, in one-letter code: Probable cytosol aminopeptidase (500 aa).

Residues Lys265 and Asp270 each coordinate Mn(2+). Lys277 is an active-site residue. Mn(2+) is bound by residues Asp288, Asp347, and Glu349. Residue Arg351 is part of the active site.

This sequence belongs to the peptidase M17 family. Requires Mn(2+) as cofactor.

The protein resides in the cytoplasm. The catalysed reaction is Release of an N-terminal amino acid, Xaa-|-Yaa-, in which Xaa is preferably Leu, but may be other amino acids including Pro although not Arg or Lys, and Yaa may be Pro. Amino acid amides and methyl esters are also readily hydrolyzed, but rates on arylamides are exceedingly low.. It catalyses the reaction Release of an N-terminal amino acid, preferentially leucine, but not glutamic or aspartic acids.. Functionally, presumably involved in the processing and regular turnover of intracellular proteins. Catalyzes the removal of unsubstituted N-terminal amino acids from various peptides. This is Probable cytosol aminopeptidase from Rickettsia peacockii (strain Rustic).